A 366-amino-acid polypeptide reads, in one-letter code: ADP-ribosylarginine hydrolase Tri1 (366 aa).

An N-terminal extension region spans residues Met-1 to Glu-65. Residues Gly-74 to Phe-366 are ADP-ribosyl hydrolase domain. Thr-116, Asp-117, Asp-118, Asp-161, and Asp-317 together coordinate Mg(2+).

The protein belongs to the ADP-ribosylglycohydrolase family. Forms a stable complex with cognate effector protein Tre1-Sp. Requires Mg(2+) as cofactor.

The catalysed reaction is N(omega)-(ADP-D-ribosyl)-L-arginyl-[protein] + H2O = ADP-D-ribose + L-arginyl-[protein]. Its function is as follows. Immunity component of a contact-dependent interbacterial competition system (also called effector-immunity systems). Acts as an arginine mono-ADP-ribosylhydrolase, mediating the removal of mono-ADP-ribose attached to arginine residues on proteins. De-ADP-ribosylates FtsZ, is able to act on other proteins as well. Neutralizes the toxic activity of cognate toxin Tre1-Sp. Expression of this protein alone in E.coli partially protects the cells against competition by wild-type S.proteamaculans. Neutralizes Tre1-Sp both by occluding its active site via its N-terminal extension and by hydrolyzing the ADP-ribosyl moiety from FtsZ; the 2 activities are dissociable by mutagenesis. This Serratia proteamaculans (strain 568) protein is ADP-ribosylarginine hydrolase Tri1.